Reading from the N-terminus, the 341-residue chain is L-threonine 3-dehydrogenase (341 aa).

Cysteine 38 provides a ligand contact to Zn(2+). Residues threonine 40 and histidine 43 each act as charge relay system in the active site. Positions 63, 64, 93, 96, 99, and 107 each coordinate Zn(2+). Residues isoleucine 175, aspartate 195, arginine 200, 262–264, and 286–287 each bind NAD(+); these read LGI and IY.

Belongs to the zinc-containing alcohol dehydrogenase family. In terms of assembly, homotetramer. The cofactor is Zn(2+).

Its subcellular location is the cytoplasm. It carries out the reaction L-threonine + NAD(+) = (2S)-2-amino-3-oxobutanoate + NADH + H(+). The protein operates within amino-acid degradation; L-threonine degradation via oxydo-reductase pathway; glycine from L-threonine: step 1/2. Functionally, catalyzes the NAD(+)-dependent oxidation of L-threonine to 2-amino-3-ketobutyrate. This chain is L-threonine 3-dehydrogenase, found in Salmonella typhi.